The chain runs to 172 residues: Large ribosomal subunit protein uL10 (172 aa).

The protein belongs to the universal ribosomal protein uL10 family. As to quaternary structure, part of the ribosomal stalk of the 50S ribosomal subunit. The N-terminus interacts with L11 and the large rRNA to form the base of the stalk. The C-terminus forms an elongated spine to which L12 dimers bind in a sequential fashion forming a multimeric L10(L12)X complex.

Forms part of the ribosomal stalk, playing a central role in the interaction of the ribosome with GTP-bound translation factors. The polypeptide is Large ribosomal subunit protein uL10 (Rhizobium etli (strain CIAT 652)).